Consider the following 147-residue polypeptide: Ribonuclease H (147 aa).

One can recognise an RNase H type-1 domain in the interval 1–142 (MREVIIYTDG…CDELARAAIA (142 aa)). Mg(2+) is bound by residues Asp9, Glu47, Asp69, and Asp134.

The protein belongs to the RNase H family. In terms of assembly, monomer. Mg(2+) serves as cofactor.

It localises to the cytoplasm. The enzyme catalyses Endonucleolytic cleavage to 5'-phosphomonoester.. Endonuclease that specifically degrades the RNA of RNA-DNA hybrids. This chain is Ribonuclease H, found in Symbiobacterium thermophilum (strain DSM 24528 / JCM 14929 / IAM 14863 / T).